A 345-amino-acid chain; its full sequence is Ribosomal large subunit pseudouridine synthase B (345 aa).

Positions methionine 1–glutamine 10 are enriched in polar residues. Residues methionine 1 to leucine 60 are disordered. The S4 RNA-binding domain maps to glutamate 64–proline 136. Aspartate 171 (nucleophile) is an active-site residue.

The protein belongs to the pseudouridine synthase RsuA family.

It catalyses the reaction uridine(2605) in 23S rRNA = pseudouridine(2605) in 23S rRNA. Functionally, responsible for synthesis of pseudouridine from uracil-2605 in 23S ribosomal RNA. The polypeptide is Ribosomal large subunit pseudouridine synthase B (rluB) (Pasteurella multocida (strain Pm70)).